The chain runs to 291 residues: Kidney mitochondrial carrier protein 1 (291 aa).

The residue at position 2 (Ser-2) is an N-acetylserine. Solcar repeat units lie at residues 7 to 96, 104 to 189, and 198 to 289; these read KPFV…LKRL, ETLP…TKKH, and DTVY…LKKL. 6 helical membrane-spanning segments follow: residues 9 to 26, 71 to 89, 105 to 124, 164 to 183, 204 to 224, and 264 to 283; these read FVYGGLASITAECGTFPI, GIAPAMLRQASYGTIKIGT, TLPINVICGILSGVISSTIA, GVSLTAQRAAIVVGVELPVY, FLSSFTCGLAGALASNPVDVV, and GFWPNWLRLGPWNIIFFVTY.

The protein belongs to the mitochondrial carrier (TC 2.A.29) family. As to quaternary structure, interacts with VDAC1.

Its subcellular location is the mitochondrion inner membrane. It catalyses the reaction sulfite(in) + sulfate(out) = sulfite(out) + sulfate(in). It carries out the reaction thiosulfate(in) + sulfate(out) = thiosulfate(out) + sulfate(in). The catalysed reaction is sulfate(out) + phosphate(in) = sulfate(in) + phosphate(out). The enzyme catalyses oxalate(in) + sulfate(out) = oxalate(out) + sulfate(in). It catalyses the reaction malonate(in) + sulfate(out) = malonate(out) + sulfate(in). It carries out the reaction maleate(in) + sulfate(out) = maleate(out) + sulfate(in). The catalysed reaction is (S)-malate(in) + sulfate(out) = (S)-malate(out) + sulfate(in). The enzyme catalyses (3S)-citramalate(in) + sulfate(out) = (3S)-citramalate(out) + sulfate(in). It catalyses the reaction (3R)-citramalate(in) + sulfate(out) = (3R)-citramalate(out) + sulfate(in). It carries out the reaction sulfate(out) + succinate(in) = sulfate(in) + succinate(out). The catalysed reaction is (S,S)-tartrate(in) + sulfate(out) = (S,S)-tartrate(out) + sulfate(in). The enzyme catalyses (2R,3R)-tartrate(in) + sulfate(out) = (2R,3R)-tartrate(out) + sulfate(in). It catalyses the reaction D-aspartate(in) + sulfate(out) = D-aspartate(out) + sulfate(in). It carries out the reaction L-aspartate(in) + sulfate(out) = L-aspartate(out) + sulfate(in). The catalysed reaction is sulfate(in) = sulfate(out). The enzyme catalyses phosphate(in) = phosphate(out). It catalyses the reaction (S)-malate(out) = (S)-malate(in). Its activity is regulated as follows. Increased activity at pH 6.0. sulfate/sulfate exchange activity is inhibited strongly by pyridoxal 5'-phosphate, bathophenanthroline and the organic mercurials mersalyl, p-chloromercuribenzoate and HgCl2. Its function is as follows. Antiporter that transports inorganic anions (sulfate, sulfite, thiosulfate and phosphate) and, to a lesser extent, a variety of dicarboxylates (e.g. malonate, malate and citramalate) and, even more so, aspartate. The sulfate/sulfate exchange is much higher than the phosphate/phosphate and malate/malate exchanges. The transport affinities is higher for sulfate and thiosulfate than for any other substrate. May catalyze the export of sulfite and thiosulfate (the hydrogen sulfide degradation products) from the mitochondria, thereby modulating the level of the hydrogen sulfide. Also may mediate a very low unidirectional transport of sulfate, phosphate and (S)-malate. This chain is Kidney mitochondrial carrier protein 1, found in Homo sapiens (Human).